The chain runs to 109 residues: Iron-sulfur cluster assembly protein CyaY (109 aa).

This sequence belongs to the frataxin family.

Its function is as follows. Involved in iron-sulfur (Fe-S) cluster assembly. May act as a regulator of Fe-S biogenesis. The protein is Iron-sulfur cluster assembly protein CyaY of Bordetella avium (strain 197N).